The primary structure comprises 478 residues: Odorant receptor coreceptor (478 aa).

Over 1–43 (MMKMKQQGLVADLLPNIRVMKTFGHFVFNYYNDNSSKYLHKVY) the chain is Cytoplasmic. A helical transmembrane segment spans residues 44–64 (CCVNLFMLLLQFGLCAVNLIV). Topologically, residues 65–73 (ESADVDDLT) are extracellular. Residues 74–94 (ANTITLLFFTHSIVKICYFAI) traverse the membrane as a helical segment. Residues 95-133 (RSKYFYRTWAIWNNPNSHPLFAESNARYHAIALKKMRLL) are Cytoplasmic-facing. Residues 134 to 154 (LFLVGGTTMLAAVAWTVLTFF) traverse the membrane as a helical segment. At 155 to 190 (EHPIRKIVDPVTNETEIIELPQLLIRSFYPFDAGKG) the chain is on the extracellular side. Asn-167 carries an N-linked (GlcNAc...) asparagine glycan. The chain crosses the membrane as a helical span at residues 191 to 211 (ITHVLVLVYQFYWVLFMLIDA). The Cytoplasmic portion of the chain corresponds to 212–349 (NSLDVLFCSW…IVRLVTAVGD (138 aa)). The disordered stretch occupies residues 261–281 (SADHLRDGDNPPPPPPPQSDN). Residues 350-370 (AYGFALLLHMLTTTITLTLLA) form a helical membrane-spanning segment. The Extracellular segment spans residues 371 to 382 (YQATKVNGINVY). The helical transmembrane segment at 383-403 (AASTIGYILYTFGQVFLFCIF) threads the bilayer. The Cytoplasmic portion of the chain corresponds to 404–454 (GNRLIEESTSVMEAAYSCHWYDGSEEAKTFVQIVCQQCQKAMSISGAKFFT). The chain crosses the membrane as a helical span at residues 455-475 (VSLDLFASVLGAVVTYFMVLV). Residues 476–478 (QLK) lie on the Extracellular side of the membrane.

It belongs to the insect chemoreceptor superfamily. Heteromeric odorant receptor channel (TC 1.A.69) family. Orco subfamily. In terms of assembly, heterodimer with conventional odorant receptors (ORs). As to expression, present in antennae (at protein level).

The protein resides in the cell membrane. Odorant coreceptor which complexes with conventional odorant receptors (ORs) to form odorant-sensing units, providing sensitive and prolonged odorant signaling and calcium permeability. Obligate coreceptor of all odorant receptors. Orco is a universal and integral part of the functional odorant receptor, involved in the dendritic localization of other olfactory receptors. Can form functional ion channels in the absence of an odor-binding odorant receptor. Plays a central role in the perception of olfactory stimuli in ants and is essential for ant social organization. Required for pheromone sensing. Also required for the development and maintenance of odorant receptor neurons (ORNs) and of antennal lobe glomeruli. This is Odorant receptor coreceptor from Ooceraea biroi (Clonal raider ant).